The following is a 352-amino-acid chain: Small ribosomal subunit biogenesis GTPase RsgA 1 (352 aa).

Positions 1 to 24 (MAKKKKLTQGQVRRVRDNQQKRLK) are disordered. A CP-type G domain is found at 104–272 (TSVLTRPDYY…LIDSPGVREF (169 aa)). GTP-binding positions include 160–163 (NKID) and 214–222 (GQSGVGKSS). Positions 296, 301, 303, and 309 each coordinate Zn(2+).

Belongs to the TRAFAC class YlqF/YawG GTPase family. RsgA subfamily. In terms of assembly, monomer. Associates with 30S ribosomal subunit, binds 16S rRNA. It depends on Zn(2+) as a cofactor.

The protein resides in the cytoplasm. In terms of biological role, one of several proteins that assist in the late maturation steps of the functional core of the 30S ribosomal subunit. Helps release RbfA from mature subunits. May play a role in the assembly of ribosomal proteins into the subunit. Circularly permuted GTPase that catalyzes slow GTP hydrolysis, GTPase activity is stimulated by the 30S ribosomal subunit. The sequence is that of Small ribosomal subunit biogenesis GTPase RsgA 1 from Vibrio vulnificus (strain CMCP6).